We begin with the raw amino-acid sequence, 243 residues long: Biosynthetic peptidoglycan transglycosylase (243 aa).

Residues 21–43 (LLIVSLVSALMSVLQVIVFRFVD) traverse the membrane as a helical segment.

The protein belongs to the glycosyltransferase 51 family.

The protein resides in the cell inner membrane. The enzyme catalyses [GlcNAc-(1-&gt;4)-Mur2Ac(oyl-L-Ala-gamma-D-Glu-L-Lys-D-Ala-D-Ala)](n)-di-trans,octa-cis-undecaprenyl diphosphate + beta-D-GlcNAc-(1-&gt;4)-Mur2Ac(oyl-L-Ala-gamma-D-Glu-L-Lys-D-Ala-D-Ala)-di-trans,octa-cis-undecaprenyl diphosphate = [GlcNAc-(1-&gt;4)-Mur2Ac(oyl-L-Ala-gamma-D-Glu-L-Lys-D-Ala-D-Ala)](n+1)-di-trans,octa-cis-undecaprenyl diphosphate + di-trans,octa-cis-undecaprenyl diphosphate + H(+). Its pathway is cell wall biogenesis; peptidoglycan biosynthesis. In terms of biological role, peptidoglycan polymerase that catalyzes glycan chain elongation from lipid-linked precursors. This chain is Biosynthetic peptidoglycan transglycosylase, found in Xylella fastidiosa (strain M12).